We begin with the raw amino-acid sequence, 283 residues long: MEMO1 family protein MK0963 (283 aa).

The protein belongs to the MEMO1 family.

In Methanopyrus kandleri (strain AV19 / DSM 6324 / JCM 9639 / NBRC 100938), this protein is MEMO1 family protein MK0963.